An 884-amino-acid polypeptide reads, in one-letter code: Probable DNA-directed RNA polymerase subunit beta (884 aa).

The protein belongs to the RNA polymerase beta chain family.

It carries out the reaction RNA(n) + a ribonucleoside 5'-triphosphate = RNA(n+1) + diphosphate. Its function is as follows. Required for late and very late gene expression. May be a component of the novel RNA polymerase activity induced by baculovirus infection. This chain is Probable DNA-directed RNA polymerase subunit beta (LEF-8), found in Orgyia pseudotsugata multicapsid polyhedrosis virus (OpMNPV).